The following is a 426-amino-acid chain: Enolase (426 aa).

Residue Gln163 coordinates (2R)-2-phosphoglycerate. Residue Glu205 is the Proton donor of the active site. Residues Asp242, Glu285, and Asp312 each contribute to the Mg(2+) site. Positions 337, 366, 367, and 388 each coordinate (2R)-2-phosphoglycerate. The active-site Proton acceptor is the Lys337.

The protein belongs to the enolase family. Mg(2+) is required as a cofactor.

The protein resides in the cytoplasm. Its subcellular location is the secreted. It localises to the cell surface. The catalysed reaction is (2R)-2-phosphoglycerate = phosphoenolpyruvate + H2O. Its pathway is carbohydrate degradation; glycolysis; pyruvate from D-glyceraldehyde 3-phosphate: step 4/5. Functionally, catalyzes the reversible conversion of 2-phosphoglycerate (2-PG) into phosphoenolpyruvate (PEP). It is essential for the degradation of carbohydrates via glycolysis. This is Enolase from Desulfosudis oleivorans (strain DSM 6200 / JCM 39069 / Hxd3) (Desulfococcus oleovorans).